The primary structure comprises 1386 residues: DNA-directed RNA polymerase subunit beta' (1386 aa).

The Zn(2+) site is built by cysteine 75, cysteine 77, cysteine 90, and cysteine 93. Mg(2+)-binding residues include aspartate 466, aspartate 468, and aspartate 470. Zn(2+) contacts are provided by cysteine 809, cysteine 883, cysteine 890, and cysteine 893.

This sequence belongs to the RNA polymerase beta' chain family. In terms of assembly, the RNAP catalytic core consists of 2 alpha, 1 beta, 1 beta' and 1 omega subunit. When a sigma factor is associated with the core the holoenzyme is formed, which can initiate transcription. Mg(2+) serves as cofactor. Zn(2+) is required as a cofactor.

The enzyme catalyses RNA(n) + a ribonucleoside 5'-triphosphate = RNA(n+1) + diphosphate. In terms of biological role, DNA-dependent RNA polymerase catalyzes the transcription of DNA into RNA using the four ribonucleoside triphosphates as substrates. The polypeptide is DNA-directed RNA polymerase subunit beta' (Oleidesulfovibrio alaskensis (strain ATCC BAA-1058 / DSM 17464 / G20) (Desulfovibrio alaskensis)).